We begin with the raw amino-acid sequence, 898 residues long: Endoplasmic reticulum metallopeptidase 1 (898 aa).

N-acetylmethionine is present on methionine 1. The interval 1 to 59 is disordered; it reads MEWSSESAAVRRHRGTAERREGQAAASHPQREASAQEDARGGGRMRGRTESGGESRGAK. Over 1 to 66 the chain is Cytoplasmic; the sequence is MEWSSESAAV…GAKTALSEAR (66 aa). The segment covering 37 to 57 has biased composition (basic and acidic residues); that stretch reads EDARGGGRMRGRTESGGESRG. A helical transmembrane segment spans residues 67-87; the sequence is TALALALYLLALRALVQLSLQ. Topologically, residues 88 to 393 are lumenal; the sequence is RLVLSRTSGL…SSSEYRHGSM (306 aa). A glycan (N-linked (GlcNAc...) asparagine) is linked at asparagine 176. A disulfide bridge links cysteine 198 with cysteine 216. 2 residues coordinate Zn(2+): histidine 199 and aspartate 211. Glutamate 245 (proton acceptor) is an active-site residue. Positions 246, 272, and 348 each coordinate Zn(2+). A helical membrane pass occupies residues 394 to 414; that stretch reads VFFDVLGLLVIAYPSRVGSII. Residues 415–451 lie on the Cytoplasmic side of the membrane; sequence NYMVVMAVVLYLGRKLLRPNHSNSNYVRDFLCGLGIT. Residues 452-472 traverse the membrane as a helical segment; the sequence is FISWFTSLVTVLIIAVFVSLI. Topologically, residues 473 to 480 are lumenal; sequence GQSLSWYN. Residues 481–501 traverse the membrane as a helical segment; sequence YFYIAVCLYGTATVAKIILIH. Over 502–515 the chain is Cytoplasmic; sequence TLAKRFYYVNASDL. A helical membrane pass occupies residues 516 to 538; the sequence is YLGELFFDTSLFVHCGFLVALTA. Residues 539–542 are Lumenal-facing; sequence QGFC. A helical membrane pass occupies residues 543-562; the sequence is SAFMSAVWVAFPLLTKLCVY. The Cytoplasmic portion of the chain corresponds to 563-573; it reads KDFKKHGAKGR. A helical transmembrane segment spans residues 574 to 594; that stretch reads FIALYLLGMFIPYLYGLYLIW. At 595-615 the chain is on the lumenal side; it reads AVFEMFTPILGRSGSEIPPDV. The chain crosses the membrane as a helical span at residues 616–636; it reads VLASILAVCVMILSSYFITFI. Over 637–645 the chain is Cytoplasmic; the sequence is YLVNSTKKT. The chain crosses the membrane as a helical span at residues 646-666; the sequence is ILTLILVCAVTFLLVCSGAFF. Residues 667 to 898 lie on the Lumenal side of the membrane; the sequence is PYSSNPDSPK…WVSTYSLFVF (232 aa). Residue asparagine 724 is glycosylated (N-linked (GlcNAc...) asparagine).

This sequence belongs to the peptidase M28 family. It depends on Zn(2+) as a cofactor. Widely expressed, with highest levels in ovary, kidney, hypothalamus and hippocampus. Within the ovarian follicle, expressed in granulosa cells, but not in oocytes. Present in both preantral and antral follicles, but not in atretic antral follicle.

The protein localises to the endoplasmic reticulum membrane. Its function is as follows. Within the ovary, required for the organization of somatic cells and oocytes into discrete follicular structures. The polypeptide is Endoplasmic reticulum metallopeptidase 1 (Rattus norvegicus (Rat)).